Reading from the N-terminus, the 470-residue chain is MTVRTRFAPSPTGFLHVGGVRTALFSWLYAKHHNGQFILRIEDTDRERSTQESVQAILDGMAWLGLNFDEGPYYQTERYARYQQVAQQLLKEGKAYRCQCSKERLEALREAQLAAKEKPRYDGHCRNQTLPDSGVPYVIRFRNPDAGIVSFHDEVYGDIHVDNSELDDLILVRSDGHPTYNFAVVIDDWDMKITHVIRGDDHINNTPRQINLFKALDAPVPVFAHLPMILGEDGKRLSKRHGAVSVLQFKELGVLPHALLNYLVRLGWSHGDQEIFSVQEMITSFDLKNVSRGVSSFNYDKLYWLNQHYQKSDSPESVANALQWHFEQAGIDLNQGPDLKDLVAVQAERCKSLAEMCQISQYFYTDTIEYNEDAVKKHLRPVVLEPLMVLHERLKALDEWKNDKIQECINDVSLQFDLNLGKIAQPLRVAVTGSGTSPSIDMTLALLGKNKSIKRLEDALEKIRARASAV.

The short motif at 9 to 19 (PSPTGFLHVGG) is the 'HIGH' region element. The 'KMSKS' region motif lies at 236 to 240 (RLSKR). Lys239 is a binding site for ATP.

It belongs to the class-I aminoacyl-tRNA synthetase family. Glutamate--tRNA ligase type 1 subfamily. In terms of assembly, monomer.

It is found in the cytoplasm. The enzyme catalyses tRNA(Glu) + L-glutamate + ATP = L-glutamyl-tRNA(Glu) + AMP + diphosphate. Catalyzes the attachment of glutamate to tRNA(Glu) in a two-step reaction: glutamate is first activated by ATP to form Glu-AMP and then transferred to the acceptor end of tRNA(Glu). In Legionella pneumophila (strain Corby), this protein is Glutamate--tRNA ligase.